The primary structure comprises 269 residues: Ribosomal RNA small subunit methyltransferase J (269 aa).

S-adenosyl-L-methionine contacts are provided by residues 125-126 (ER) and Asp179.

It belongs to the methyltransferase superfamily. RsmJ family.

The protein localises to the cytoplasm. The enzyme catalyses guanosine(1516) in 16S rRNA + S-adenosyl-L-methionine = N(2)-methylguanosine(1516) in 16S rRNA + S-adenosyl-L-homocysteine + H(+). Specifically methylates the guanosine in position 1516 of 16S rRNA. The sequence is that of Ribosomal RNA small subunit methyltransferase J from Pseudomonas syringae pv. tomato (strain ATCC BAA-871 / DC3000).